A 291-amino-acid chain; its full sequence is HTH-type transcriptional regulator CitR (291 aa).

The 58-residue stretch at 1–58 (MDFKWLHTFVTAAKYENFRKTAETLFLSQPTVTVHIKQLEKEISCKLFERKGRQIQLT) folds into the HTH lysR-type domain. A DNA-binding region (H-T-H motif) is located at residues 18–37 (FRKTAETLFLSQPTVTVHIK).

It belongs to the LysR transcriptional regulatory family.

It is found in the cytoplasm. Negative regulatory protein for the citA gene for citrate synthase I. This chain is HTH-type transcriptional regulator CitR (citR), found in Bacillus subtilis (strain 168).